Here is a 115-residue protein sequence, read N- to C-terminus: Basic leucine zipper transcriptional factor ATF-like (115 aa).

Residues 1 to 57 are disordered; sequence MQQEPDRNEQGYCSSPPSSNKQDSSDDTKKIQRREKNRIAAQKSRQRQTQKADSLHI. One can recognise a bZIP domain in the interval 27-90; it reads DTKKIQRREK…KYLTCVLSTH (64 aa). Positions 29-51 are basic motif; that stretch reads KKIQRREKNRIAAQKSRQRQTQK. The tract at residues 55 to 83 is leucine-zipper; the sequence is LHIESENLERLNSALRGEISGLREELKYL.

This sequence belongs to the bZIP family.

Its subcellular location is the nucleus. The protein resides in the cytoplasm. Its function is as follows. AP-1 family transcription factor that controls the differentiation of lineage-specific cells in the immune system: specifically mediates the differentiation of T-helper 17 cells (Th17), follicular T-helper cells (TfH), CD8(+) dendritic cells and class-switch recombination (CSR) in B-cells. This chain is Basic leucine zipper transcriptional factor ATF-like (batf), found in Xenopus tropicalis (Western clawed frog).